The following is a 165-amino-acid chain: Large ribosomal subunit protein uL10 (165 aa).

It belongs to the universal ribosomal protein uL10 family. In terms of assembly, part of the ribosomal stalk of the 50S ribosomal subunit. The N-terminus interacts with L11 and the large rRNA to form the base of the stalk. The C-terminus forms an elongated spine to which L12 dimers bind in a sequential fashion forming a multimeric L10(L12)X complex.

Forms part of the ribosomal stalk, playing a central role in the interaction of the ribosome with GTP-bound translation factors. This chain is Large ribosomal subunit protein uL10, found in Mycoplasmopsis synoviae (strain 53) (Mycoplasma synoviae).